The primary structure comprises 54 residues: QSTNDLIKACGRELVRLWVEICGSVRWGQSALRMTLSEKCCQVGCIRKDIARLC.

Gln-1 carries the pyrrolidone carboxylic acid modification. 3 disulfide bridges follow: Cys-10/Cys-41, Cys-22/Cys-54, and Cys-40/Cys-45.

The protein belongs to the insulin family. As to quaternary structure, heterodimer of a B chain and an A chain linked by two disulfide bonds.

The protein localises to the secreted. Its function is as follows. Relaxin is an ovarian hormone that acts with estrogen to produce dilatation of the birth canal in many mammals. The sequence is that of Relaxin from Balaenoptera acutorostrata (Common minke whale).